A 246-amino-acid polypeptide reads, in one-letter code: Probable septum site-determining protein MinC (246 aa).

The segment at 116–140 is disordered; it reads AAVSPPPPPPARAEPAPPAARPAPG. The segment covering 119 to 136 has biased composition (pro residues); the sequence is SPPPPPPARAEPAPPAAR.

It belongs to the MinC family. Interacts with MinD and FtsZ.

Its function is as follows. Cell division inhibitor that blocks the formation of polar Z ring septums. Rapidly oscillates between the poles of the cell to destabilize FtsZ filaments that have formed before they mature into polar Z rings. Prevents FtsZ polymerization. The protein is Probable septum site-determining protein MinC of Xanthomonas oryzae pv. oryzae (strain MAFF 311018).